The primary structure comprises 468 residues: Argininosuccinate lyase (468 aa).

Belongs to the lyase 1 family. Argininosuccinate lyase subfamily.

The protein resides in the cytoplasm. The enzyme catalyses 2-(N(omega)-L-arginino)succinate = fumarate + L-arginine. Its pathway is amino-acid biosynthesis; L-arginine biosynthesis; L-arginine from L-ornithine and carbamoyl phosphate: step 3/3. In Paraburkholderia phytofirmans (strain DSM 17436 / LMG 22146 / PsJN) (Burkholderia phytofirmans), this protein is Argininosuccinate lyase.